Here is a 203-residue protein sequence, read N- to C-terminus: Small ribosomal subunit protein uS7A (203 aa).

It belongs to the universal ribosomal protein uS7 family. Component of the small ribosomal subunit (SSU). Mature yeast ribosomes consist of a small (40S) and a large (60S) subunit. The 40S small subunit contains 1 molecule of ribosomal RNA (18S rRNA) and at least 33 different proteins. The large 60S subunit contains 3 rRNA molecules (25S, 5.8S and 5S rRNA) and at least 46 different proteins.

Its subcellular location is the cytoplasm. It is found in the nucleus. It localises to the nucleolus. Its function is as follows. Component of the ribosome, a large ribonucleoprotein complex responsible for the synthesis of proteins in the cell. The small ribosomal subunit (SSU) binds messenger RNAs (mRNAs) and translates the encoded message by selecting cognate aminoacyl-transfer RNA (tRNA) molecules. The large subunit (LSU) contains the ribosomal catalytic site termed the peptidyl transferase center (PTC), which catalyzes the formation of peptide bonds, thereby polymerizing the amino acids delivered by tRNAs into a polypeptide chain. The nascent polypeptides leave the ribosome through a tunnel in the LSU and interact with protein factors that function in enzymatic processing, targeting, and the membrane insertion of nascent chains at the exit of the ribosomal tunnel. This is Small ribosomal subunit protein uS7A (rps5) from Schizosaccharomyces pombe (strain 972 / ATCC 24843) (Fission yeast).